A 134-amino-acid polypeptide reads, in one-letter code: Small ribosomal subunit protein uS8c (134 aa).

Belongs to the universal ribosomal protein uS8 family. Part of the 30S ribosomal subunit.

It localises to the plastid. It is found in the chloroplast. Functionally, one of the primary rRNA binding proteins, it binds directly to 16S rRNA central domain where it helps coordinate assembly of the platform of the 30S subunit. This is Small ribosomal subunit protein uS8c (rps8) from Capsella bursa-pastoris (Shepherd's purse).